Consider the following 55-residue polypeptide: Large ribosomal subunit protein bL33 (55 aa).

Belongs to the bacterial ribosomal protein bL33 family.

The polypeptide is Large ribosomal subunit protein bL33 (Aliivibrio salmonicida (strain LFI1238) (Vibrio salmonicida (strain LFI1238))).